A 314-amino-acid polypeptide reads, in one-letter code: 2,3-dihydroxyphenylpropionate/2,3-dihydroxicinnamic acid 1,2-dioxygenase (314 aa).

His-115 (proton donor) is an active-site residue. His-179 serves as the catalytic Proton acceptor.

Belongs to the LigB/MhpB extradiol dioxygenase family. As to quaternary structure, homotetramer. Fe(2+) is required as a cofactor.

The catalysed reaction is 3-(2,3-dihydroxyphenyl)propanoate + O2 = (2Z,4E)-2-hydroxy-6-oxonona-2,4-dienedioate + H(+). The enzyme catalyses (2E)-3-(2,3-dihydroxyphenyl)prop-2-enoate + O2 = (2Z,4E,7E)-2-hydroxy-6-oxonona-2,4,7-trienedioate + H(+). It participates in aromatic compound metabolism; 3-phenylpropanoate degradation. Its function is as follows. Catalyzes the non-heme iron(II)-dependent oxidative cleavage of 2,3-dihydroxyphenylpropionic acid and 2,3-dihydroxicinnamic acid into 2-hydroxy-6-ketononadienedioate and 2-hydroxy-6-ketononatrienedioate, respectively. This Escherichia coli (strain 55989 / EAEC) protein is 2,3-dihydroxyphenylpropionate/2,3-dihydroxicinnamic acid 1,2-dioxygenase.